The chain runs to 63 residues: Jingdongin-1-MT1 (63 aa).

A signal peptide spans Met-1 to Cys-22. The propeptide at Glu-23 to Glu-44 is removed in mature form. Cys-57 and Cys-63 are oxidised to a cystine.

It belongs to the frog skin active peptide (FSAP) family. Brevinin subfamily. As to expression, expressed by the skin glands.

It is found in the secreted. Functionally, antimicrobial peptide. Active against some Gram-negative and a variety of Gram-positive bacterial strains. Active against fungus C.glabrata 090902 but not against C.neoformans 201211. Shows hemolytic activity against human erythrocytes. This Amolops mantzorum (Sichuan torrent frog) protein is Jingdongin-1-MT1.